Here is a 1186-residue protein sequence, read N- to C-terminus: DNA-directed RNA polymerase subunit beta (1186 aa).

The segment at 1149-1186 (KEEDDDPSTSSDDLGFNIGARPDAAAKEDQVAEEPEFQ) is disordered.

This sequence belongs to the RNA polymerase beta chain family. As to quaternary structure, the RNAP catalytic core consists of 2 alpha, 1 beta, 1 beta' and 1 omega subunit. When a sigma factor is associated with the core the holoenzyme is formed, which can initiate transcription.

The catalysed reaction is RNA(n) + a ribonucleoside 5'-triphosphate = RNA(n+1) + diphosphate. Its function is as follows. DNA-dependent RNA polymerase catalyzes the transcription of DNA into RNA using the four ribonucleoside triphosphates as substrates. This chain is DNA-directed RNA polymerase subunit beta, found in Bifidobacterium adolescentis (strain ATCC 15703 / DSM 20083 / NCTC 11814 / E194a).